A 418-amino-acid polypeptide reads, in one-letter code: Tyrosine--tRNA ligase (418 aa).

Tyrosine 39 provides a ligand contact to L-tyrosine. Residues 44-53 carry the 'HIGH' region motif; the sequence is CTADSLHVGS. The L-tyrosine site is built by tyrosine 176 and glutamine 180. The 'KMSKS' region motif lies at 236-240; it reads KMGKT. Lysine 239 provides a ligand contact to ATP. One can recognise an S4 RNA-binding domain in the interval 350-416; the sequence is LPLAEMMRAT…KKRHALIRVL (67 aa).

Belongs to the class-I aminoacyl-tRNA synthetase family. TyrS type 1 subfamily. In terms of assembly, homodimer.

The protein localises to the cytoplasm. The enzyme catalyses tRNA(Tyr) + L-tyrosine + ATP = L-tyrosyl-tRNA(Tyr) + AMP + diphosphate + H(+). Functionally, catalyzes the attachment of tyrosine to tRNA(Tyr) in a two-step reaction: tyrosine is first activated by ATP to form Tyr-AMP and then transferred to the acceptor end of tRNA(Tyr). This is Tyrosine--tRNA ligase from Rhodospirillum rubrum (strain ATCC 11170 / ATH 1.1.1 / DSM 467 / LMG 4362 / NCIMB 8255 / S1).